We begin with the raw amino-acid sequence, 91 residues long: Small ribosomal subunit protein bS16 (91 aa).

It belongs to the bacterial ribosomal protein bS16 family.

In Ruthia magnifica subsp. Calyptogena magnifica, this protein is Small ribosomal subunit protein bS16.